A 236-amino-acid chain; its full sequence is Uridylate kinase (236 aa).

10 to 13 is an ATP binding site; it reads KLSG. Glycine 52 contributes to the UMP binding site. Glycine 53 and arginine 57 together coordinate ATP. Residues aspartate 72 and 133 to 140 contribute to the UMP site; that span reads TGNPFFTT. ATP-binding residues include threonine 160, tyrosine 166, and aspartate 169.

This sequence belongs to the UMP kinase family. Homohexamer.

The protein localises to the cytoplasm. The catalysed reaction is UMP + ATP = UDP + ADP. Its pathway is pyrimidine metabolism; CTP biosynthesis via de novo pathway; UDP from UMP (UMPK route): step 1/1. Inhibited by UTP. Catalyzes the reversible phosphorylation of UMP to UDP. The sequence is that of Uridylate kinase from Parabacteroides distasonis (strain ATCC 8503 / DSM 20701 / CIP 104284 / JCM 5825 / NCTC 11152).